The following is a 258-amino-acid chain: Gamma-secretase subunit Aph-1b (258 aa).

The next 7 helical transmembrane spans lie at 3–23 (VAVF…LFMF), 32–52 (VIFL…SSLV), 70–90 (GLLI…RYGY), 118–138 (AYVS…VNIL), 161–181 (AFMT…FFEA), 187–207 (WWAL…TFVN), and 214–234 (LIPT…CAGG).

It belongs to the APH-1 family. Component of the gamma-secretase complex, a complex composed of a presenilin homodimer (PSEN1 or PSEN2), nicastrin (NCSTN), APH1 and PEN2.

Its subcellular location is the membrane. Essential subunit of the gamma-secretase complex, an endoprotease complex that catalyzes the intramembrane cleavage of integral proteins such as Notch receptors. It may represent a stabilizing cofactor for the presenilin homodimer that promotes the formation of a stable complex. This chain is Gamma-secretase subunit Aph-1b (aph1b), found in Danio rerio (Zebrafish).